We begin with the raw amino-acid sequence, 117 residues long: cAMP-regulated phosphoprotein 19-B (117 aa).

The segment covering 1-37 has biased composition (basic and acidic residues); sequence MSRDNQEIKAPEESSAEEQKEMDDKVTSPEKAEEIKL. Residues 1–54 form a disordered region; that stretch reads MSRDNQEIKAPEESSAEEQKEMDDKVTSPEKAEEIKLKSRYPNIGPKPGGSDFL. Ser-28 carries the phosphoserine; by CDK2 modification. A Phosphoserine; by GWL modification is found at Ser-67. Residues 77 to 117 are disordered; it reads MKNKQLPTAAPDKTEVTGDHIPTPQDLPQRKPSLVASKLAG. Phosphothreonine; by CDK2 is present on Thr-99. Ser-109 is subject to Phosphoserine; by PKA.

This sequence belongs to the endosulfine family. Interacts (when phosphorylated at Ser-67) with ppp2r2d. In terms of processing, phosphorylation at Ser-67 by gwl during mitosis is essential for interaction with ppp2r2d (PR55-delta) and subsequent inactivation of PP2A.

Its subcellular location is the cytoplasm. Its function is as follows. Protein phosphatase inhibitor that specifically inhibits protein phosphatase 2A (PP2A) during mitosis. When phosphorylated at Ser-67 during mitosis, specifically interacts with ppp2r2d (PR55-delta) and inhibits its activity, leading to inactivation of PP2A, an essential condition to keep cyclin-B1-CDK1 activity high during M phase. In Xenopus laevis (African clawed frog), this protein is cAMP-regulated phosphoprotein 19-B (arpp19-b).